The sequence spans 734 residues: Ribosomal RNA large subunit methyltransferase K/L (734 aa).

The THUMP domain occupies 49–167; the sequence is HAYRICMWSR…KTEHTYCLDL (119 aa).

This sequence belongs to the methyltransferase superfamily. RlmKL family.

It localises to the cytoplasm. It catalyses the reaction guanosine(2445) in 23S rRNA + S-adenosyl-L-methionine = N(2)-methylguanosine(2445) in 23S rRNA + S-adenosyl-L-homocysteine + H(+). The enzyme catalyses guanosine(2069) in 23S rRNA + S-adenosyl-L-methionine = N(2)-methylguanosine(2069) in 23S rRNA + S-adenosyl-L-homocysteine + H(+). Functionally, specifically methylates the guanine in position 2445 (m2G2445) and the guanine in position 2069 (m7G2069) of 23S rRNA. This is Ribosomal RNA large subunit methyltransferase K/L from Acinetobacter baumannii (strain SDF).